A 453-amino-acid polypeptide reads, in one-letter code: MLPIIVLIGRTNVGKSTLFNILSKTRNALVADYPGLTRDRNYGYCYLKENKKITIVDTAGINFKSQKIEKQSHEQTLKAIKECDGILFLVNARDGVMPEEYEISRKIRKYEKKTILVINKIDGIKEISKINEFYSLGFKENIKISASHNQGINNLISKYLTPWINSKFKEKKLEKISQEHSKKEKNSVKIACIGKPNVGKSTLINSLLMKKRMITSNKAGTTLDTVLVPIKYNYKNYIFIDTAGMSKKKSKTNKIEKFCKIKTLQTIEKSHLTLLIIDAKDQISKQDLLLSSFIEKSGKPLIIVINKCDLLSLKEKKNLENLIKKQLKCNFFSKIHFISALNNEGTVELFKSIDTSYHTSQKKIKTSQVMKIMHKAVKKHQPPIINGRRIKLKYAHLGNSNPIEIMIHGNQVKNLSLCYKKYLKNFFYKTLKMNGTPIKIQFKETMNPYISKK.

2 EngA-type G domains span residues 3–167 (PIIV…INSK) and 188–361 (VKIA…HTSQ). Residues 9-16 (GRTNVGKS), 57-61 (DTAGI), 119-122 (NKID), 194-201 (GKPNVGKS), 241-245 (DTAGM), and 306-309 (NKCD) each bind GTP. Positions 362 to 446 (KKIKTSQVMK…PIKIQFKETM (85 aa)) constitute a KH-like domain.

It belongs to the TRAFAC class TrmE-Era-EngA-EngB-Septin-like GTPase superfamily. EngA (Der) GTPase family. Associates with the 50S ribosomal subunit.

Functionally, GTPase that plays an essential role in the late steps of ribosome biogenesis. This chain is GTPase Der, found in Buchnera aphidicola subsp. Schizaphis graminum (strain Sg).